The following is a 710-amino-acid chain: Phosphoribosylformylglycinamidine synthase subunit PurL (710 aa).

The active site involves H36. 2 residues coordinate ATP: Y39 and K80. E82 is a Mg(2+) binding site. Residues 83–86 and R105 contribute to the substrate site; that span reads SHNH. H84 (proton acceptor) is an active-site residue. Residue D106 coordinates Mg(2+). Q226 is a binding site for substrate. D252 is a binding site for Mg(2+). Residue 294-296 coordinates substrate; that stretch reads ETQ. Residues D470 and G507 each contribute to the ATP site. S510 provides a ligand contact to substrate.

Belongs to the FGAMS family. In terms of assembly, monomer. Part of the FGAM synthase complex composed of 1 PurL, 1 PurQ and 2 PurS subunits.

The protein localises to the cytoplasm. It carries out the reaction N(2)-formyl-N(1)-(5-phospho-beta-D-ribosyl)glycinamide + L-glutamine + ATP + H2O = 2-formamido-N(1)-(5-O-phospho-beta-D-ribosyl)acetamidine + L-glutamate + ADP + phosphate + H(+). It functions in the pathway purine metabolism; IMP biosynthesis via de novo pathway; 5-amino-1-(5-phospho-D-ribosyl)imidazole from N(2)-formyl-N(1)-(5-phospho-D-ribosyl)glycinamide: step 1/2. Part of the phosphoribosylformylglycinamidine synthase complex involved in the purines biosynthetic pathway. Catalyzes the ATP-dependent conversion of formylglycinamide ribonucleotide (FGAR) and glutamine to yield formylglycinamidine ribonucleotide (FGAM) and glutamate. The FGAM synthase complex is composed of three subunits. PurQ produces an ammonia molecule by converting glutamine to glutamate. PurL transfers the ammonia molecule to FGAR to form FGAM in an ATP-dependent manner. PurS interacts with PurQ and PurL and is thought to assist in the transfer of the ammonia molecule from PurQ to PurL. The polypeptide is Phosphoribosylformylglycinamidine synthase subunit PurL (Sulfolobus acidocaldarius (strain ATCC 33909 / DSM 639 / JCM 8929 / NBRC 15157 / NCIMB 11770)).